The sequence spans 360 residues: Phospho-N-acetylmuramoyl-pentapeptide-transferase (360 aa).

The next 10 membrane-spanning stretches (helical) occupy residues 25 to 45 (RGIL…PWMI), 73 to 93 (TMGG…WADL), 97 to 117 (YVWV…VDDY), 132 to 152 (WKYF…YMTA), 168 to 188 (VSIP…VGSS), 199 to 219 (GLAI…CYLS), 236 to 256 (AGEL…FLWF), 263 to 283 (VFMG…IAVI), 288 to 308 (VVLF…IIQV), and 338 to 358 (VIVR…ATLK).

This sequence belongs to the glycosyltransferase 4 family. MraY subfamily. The cofactor is Mg(2+).

The protein resides in the cell inner membrane. The enzyme catalyses UDP-N-acetyl-alpha-D-muramoyl-L-alanyl-gamma-D-glutamyl-meso-2,6-diaminopimeloyl-D-alanyl-D-alanine + di-trans,octa-cis-undecaprenyl phosphate = di-trans,octa-cis-undecaprenyl diphospho-N-acetyl-alpha-D-muramoyl-L-alanyl-D-glutamyl-meso-2,6-diaminopimeloyl-D-alanyl-D-alanine + UMP. It participates in cell wall biogenesis; peptidoglycan biosynthesis. In terms of biological role, catalyzes the initial step of the lipid cycle reactions in the biosynthesis of the cell wall peptidoglycan: transfers peptidoglycan precursor phospho-MurNAc-pentapeptide from UDP-MurNAc-pentapeptide onto the lipid carrier undecaprenyl phosphate, yielding undecaprenyl-pyrophosphoryl-MurNAc-pentapeptide, known as lipid I. The chain is Phospho-N-acetylmuramoyl-pentapeptide-transferase from Ectopseudomonas mendocina (strain ymp) (Pseudomonas mendocina).